The sequence spans 174 residues: ATP-dependent protease subunit HslV (174 aa).

The active site involves threonine 2. Residues glycine 157, cysteine 160, and threonine 163 each coordinate Na(+).

It belongs to the peptidase T1B family. HslV subfamily. As to quaternary structure, a double ring-shaped homohexamer of HslV is capped on each side by a ring-shaped HslU homohexamer. The assembly of the HslU/HslV complex is dependent on binding of ATP.

It localises to the cytoplasm. It carries out the reaction ATP-dependent cleavage of peptide bonds with broad specificity.. Its activity is regulated as follows. Allosterically activated by HslU binding. Its function is as follows. Protease subunit of a proteasome-like degradation complex believed to be a general protein degrading machinery. The polypeptide is ATP-dependent protease subunit HslV (Shewanella denitrificans (strain OS217 / ATCC BAA-1090 / DSM 15013)).